A 479-amino-acid chain; its full sequence is G-rich sequence factor 1 (479 aa).

A mitochondrion-targeting transit peptide spans methionine 1–tyrosine 116. RRM domains follow at residues tyrosine 149–valine 245 and glycine 249–arginine 325. Serine 243 bears the Phosphoserine mark. Serine 334 bears the Phosphoserine mark. One can recognise an RRM 3 domain in the interval histidine 400 to lysine 479.

In terms of assembly, monomer. Found in a complex with DDX28, DHX30, FASTKD2 and FASTKD5. Interacts with the mitochondrial RNase P complex subunit TRMT10C/MRPP1. Interacts with the 2 components of the mitochondrial degradosome complex, PNPT1 and SUPV3L1, in an RNA-dependent manner.

Its subcellular location is the mitochondrion matrix. Functionally, regulator of post-transcriptional mitochondrial gene expression, required for assembly of the mitochondrial ribosome and for recruitment of mRNA and lncRNA. Binds RNAs containing the 14 base G-rich element. Preferentially binds RNAs transcribed from three contiguous genes on the light strand of mtDNA, the ND6 mRNA, and the long non-coding RNAs for MT-CYB and MT-ND5, each of which contains multiple consensus binding sequences. Involved in the degradosome-mediated decay of non-coding mitochondrial transcripts (MT-ncRNA) and tRNA-like molecules. Acts by unwinding G-quadruplex RNA structures in MT-ncRNA, thus facilitating their degradation by the degradosome. G-quadruplexes (G4) are non-canonical 4 stranded structures formed by transcripts from the light strand of mtDNA. This is G-rich sequence factor 1 (Grsf1) from Mus musculus (Mouse).